A 63-amino-acid polypeptide reads, in one-letter code: Prokaryotic ubiquitin-like protein Pup (63 aa).

Residues methionine 1–threonine 28 form a disordered region. The segment at glutamate 19–phenylalanine 57 is ARC ATPase binding. Glutamate 63 participates in a covalent cross-link: Isoglutamyl lysine isopeptide (Glu-Lys) (interchain with K-? in acceptor proteins).

This sequence belongs to the prokaryotic ubiquitin-like protein family. As to quaternary structure, strongly interacts with the proteasome-associated ATPase ARC through a hydrophobic interface; the interacting region of Pup lies in its C-terminal half. There is one Pup binding site per ARC hexamer ring.

It functions in the pathway protein degradation; proteasomal Pup-dependent pathway. In terms of biological role, protein modifier that is covalently attached to lysine residues of substrate proteins, thereby targeting them for proteasomal degradation. The tagging system is termed pupylation. In Bifidobacterium dentium (strain ATCC 27534 / DSM 20436 / JCM 1195 / Bd1), this protein is Prokaryotic ubiquitin-like protein Pup.